A 311-amino-acid chain; its full sequence is Tricarboxylate transport protein, mitochondrial (311 aa).

Positions 1–13 are cleaved as a propeptide — removed in mature form; sequence MAAARAPRALTSA. A compositionally biased stretch (low complexity) spans 1–15; sequence MAAARAPRALTSASP. The segment at 1 to 22 is disordered; sequence MAAARAPRALTSASPGSGKAKL. 3 Solcar repeats span residues 23-111, 122-208, and 218-303; these read THPG…LSNH, TRGL…LRNW, and MNPL…VVKL. 3 helical membrane passes run 29–46, 86–105, and 129–143; these read ILAGGLAGGIEICITFPT, GLSSLLYGSIPKAAVRFGTF, and LGAGVPEAVVVVCPM. A Phosphoserine modification is found at serine 156. 3 helical membrane passes run 183–202, 224–241, and 278–297; these read GLTATVLKQGSNQGIRFFVM, GVFGAIAGAASVFGNTPL, and GTVPRLGRVCLDVAIVFIIY.

The protein belongs to the mitochondrial carrier (TC 2.A.29) family. In terms of processing, possesses a short cleavable presequence, which, however, is found to be dispensable both for targeting to mitochondria and insertion into the inner membrane. However, the presequence is required to keep SLC25A1 in a soluble state and thus in an import-competent state. Mature SLC25A1 lacking the presequence is prone to aggregation.

Its subcellular location is the mitochondrion inner membrane. The protein localises to the mitochondrion membrane. It carries out the reaction (S)-malate(in) + citrate(out) = (S)-malate(out) + citrate(in). The enzyme catalyses D-threo-isocitrate(in) + citrate(out) = D-threo-isocitrate(out) + citrate(in). It catalyses the reaction citrate(out) + succinate(in) = citrate(in) + succinate(out). The catalysed reaction is phosphoenolpyruvate(in) + citrate(out) = phosphoenolpyruvate(out) + citrate(in). It carries out the reaction cis-aconitate(in) + citrate(out) = cis-aconitate(out) + citrate(in). The enzyme catalyses trans-aconitate(in) + citrate(out) = trans-aconitate(out) + citrate(in). It catalyses the reaction maleate(in) + citrate(out) = maleate(out) + citrate(in). Its function is as follows. Mitochondrial electroneutral antiporter that exports citrate from the mitochondria into the cytosol in exchange for malate. Also able to mediate the exchange of citrate for isocitrate, phosphoenolpyruvate, cis-aconitate and to a lesser extent trans-aconitate, maleate and succinate. In the cytoplasm, citrate plays important roles in fatty acid and sterol synthesis, regulation of glycolysis, protein acetylation, and other physiopathological processes. This is Tricarboxylate transport protein, mitochondrial (SLC25A1) from Bos taurus (Bovine).